Reading from the N-terminus, the 151-residue chain is Deoxyuridine 5'-triphosphate nucleotidohydrolase (151 aa).

Substrate is bound by residues 70–72, Asn83, 87–89, and Met97; these read RSG and LID.

Belongs to the dUTPase family. Mg(2+) is required as a cofactor.

The enzyme catalyses dUTP + H2O = dUMP + diphosphate + H(+). The protein operates within pyrimidine metabolism; dUMP biosynthesis; dUMP from dCTP (dUTP route): step 2/2. Functionally, this enzyme is involved in nucleotide metabolism: it produces dUMP, the immediate precursor of thymidine nucleotides and it decreases the intracellular concentration of dUTP so that uracil cannot be incorporated into DNA. This is Deoxyuridine 5'-triphosphate nucleotidohydrolase from Salmonella enteritidis PT4 (strain P125109).